Here is a 736-residue protein sequence, read N- to C-terminus: Catalase-peroxidase 2 (736 aa).

A cross-link (tryptophyl-tyrosyl-methioninium (Trp-Tyr) (with M-253)) is located at residues 91-227 (WHSAGTYRMG…LAAVQMGLIY (137 aa)). His92 (proton acceptor) is an active-site residue. The segment at residues 227 to 253 (YVNPEGPDGNPDPVAAAYDIREVFGRM) is a cross-link (tryptophyl-tyrosyl-methioninium (Tyr-Met) (with W-91)). His268 provides a ligand contact to heme b.

It belongs to the peroxidase family. Peroxidase/catalase subfamily. As to quaternary structure, homodimer or homotetramer. Heme b serves as cofactor. Post-translationally, formation of the three residue Trp-Tyr-Met cross-link is important for the catalase, but not the peroxidase activity of the enzyme.

The enzyme catalyses H2O2 + AH2 = A + 2 H2O. It catalyses the reaction 2 H2O2 = O2 + 2 H2O. Functionally, bifunctional enzyme with both catalase and broad-spectrum peroxidase activity. Shows peroxidase specificity towards odianisidine, ABTS and pyrogallol, but methoxyphenol and 2-chloronaphthol are not peroxidized. The polypeptide is Catalase-peroxidase 2 (Burkholderia cenocepacia (strain ATCC BAA-245 / DSM 16553 / LMG 16656 / NCTC 13227 / J2315 / CF5610) (Burkholderia cepacia (strain J2315))).